The sequence spans 393 residues: NAD(P)H-quinone oxidoreductase subunit H, chloroplastic (393 aa).

Belongs to the complex I 49 kDa subunit family. As to quaternary structure, NDH is composed of at least 16 different subunits, 5 of which are encoded in the nucleus.

Its subcellular location is the plastid. The protein localises to the chloroplast thylakoid membrane. It catalyses the reaction a plastoquinone + NADH + (n+1) H(+)(in) = a plastoquinol + NAD(+) + n H(+)(out). The enzyme catalyses a plastoquinone + NADPH + (n+1) H(+)(in) = a plastoquinol + NADP(+) + n H(+)(out). Functionally, NDH shuttles electrons from NAD(P)H:plastoquinone, via FMN and iron-sulfur (Fe-S) centers, to quinones in the photosynthetic chain and possibly in a chloroplast respiratory chain. The immediate electron acceptor for the enzyme in this species is believed to be plastoquinone. Couples the redox reaction to proton translocation, and thus conserves the redox energy in a proton gradient. In Nuphar advena (Common spatterdock), this protein is NAD(P)H-quinone oxidoreductase subunit H, chloroplastic.